A 1021-amino-acid polypeptide reads, in one-letter code: INO80 complex subunit D (1021 aa).

Lys87 participates in a covalent cross-link: Glycyl lysine isopeptide (Lys-Gly) (interchain with G-Cter in SUMO2). Phosphoserine is present on Ser132. Disordered stretches follow at residues 194–239, 514–570, 808–844, 911–940, and 976–1021; these read FSTP…PMQG, RGDN…SMPT, RQQYSSDHSHSSPHGSHYDSEHVPSPYSDHITSPHTS, SLSTPPTTSNSETTQPAFATVTPSSSSVLP, and QLSS…PSPN. The segment covering 224 to 239 has biased composition (polar residues); sequence VCKSPQPQNTSLPMQG. Basic residues predominate over residues 520 to 554; sequence KVQHQQQRKPRKKTKPPALTKKHKKKRRRGPRRPQ. The span at 911–926 shows a compositional bias: low complexity; sequence SLSTPPTTSNSETTQP. Positions 931–940 are enriched in polar residues; sequence VTPSSSSVLP. The segment covering 995 to 1014 has biased composition (low complexity); it reads APPTGFTATGATATSTNNAS.

It belongs to the INO80D family. As to quaternary structure, component of the chromatin remodeling INO80 complex; specifically part of a complex module associated with the N-terminus of INO80.

Its subcellular location is the nucleus. Functionally, putative regulatory component of the chromatin remodeling INO80 complex which is involved in transcriptional regulation, DNA replication and probably DNA repair. The sequence is that of INO80 complex subunit D from Mus musculus (Mouse).